Reading from the N-terminus, the 67-residue chain is Ceratotoxin-C (67 aa).

A signal peptide spans 1-23 (MANIKAVFLICIVAFIAFHCVVA). Positions 24 to 35 (EPTAEDSVVVKR) are excised as a propeptide.

Homomer of four to six subunits.

It localises to the secreted. Its function is as follows. Female-specific peptides with potent activity against Gram-positive and Gram-negative bacteria. They have as well hemolytic activity. This is Ceratotoxin-C (CTXC1) from Ceratitis capitata (Mediterranean fruit fly).